Here is a 615-residue protein sequence, read N- to C-terminus: Chromosomal replication initiator protein DnaA (615 aa).

Residues 1–88 (MSEGQINLAM…RVAVTVDPSA (88 aa)) are domain I, interacts with DnaA modulators. The interval 85-272 (DPSAVPPSAP…PTSGGPDQLN (188 aa)) is disordered. The domain II stretch occupies residues 88–269 (AVPPSAPTEE…STNPTSGGPD (182 aa)). 2 stretches are compositionally biased toward low complexity: residues 94–112 (PTEEASSTSSPDSSHPAPD) and 173–190 (PSSADPGSPASPAPVAES). Residues 270–486 (QLNPKYTFDT…GALIRVTAFA (217 aa)) form a domain III, AAA+ region region. The ATP site is built by Gly-314, Gly-316, Lys-317, and Thr-318. A domain IV, binds dsDNA region spans residues 487 to 615 (SLNRQSVDLH…QQAHHNHHHL (129 aa)).

The protein belongs to the DnaA family. As to quaternary structure, oligomerizes as a right-handed, spiral filament on DNA at oriC.

The protein resides in the cytoplasm. In terms of biological role, plays an essential role in the initiation and regulation of chromosomal replication. ATP-DnaA binds to the origin of replication (oriC) to initiate formation of the DNA replication initiation complex once per cell cycle. Binds the DnaA box (a 9 base pair repeat at the origin) and separates the double-stranded (ds)DNA. Forms a right-handed helical filament on oriC DNA; dsDNA binds to the exterior of the filament while single-stranded (ss)DNA is stabiized in the filament's interior. The ATP-DnaA-oriC complex binds and stabilizes one strand of the AT-rich DNA unwinding element (DUE), permitting loading of DNA polymerase. After initiation quickly degrades to an ADP-DnaA complex that is not apt for DNA replication. Binds acidic phospholipids. The sequence is that of Chromosomal replication initiator protein DnaA from Thermobifida fusca (strain YX).